The sequence spans 429 residues: Histidine--tRNA ligase (429 aa).

Belongs to the class-II aminoacyl-tRNA synthetase family. Homodimer.

The protein resides in the cytoplasm. It catalyses the reaction tRNA(His) + L-histidine + ATP = L-histidyl-tRNA(His) + AMP + diphosphate + H(+). This Streptococcus mutans serotype c (strain ATCC 700610 / UA159) protein is Histidine--tRNA ligase.